The following is a 120-amino-acid chain: UPF0231 protein YacL (120 aa).

This sequence belongs to the UPF0231 family.

The chain is UPF0231 protein YacL from Salmonella heidelberg (strain SL476).